The primary structure comprises 308 residues: Sulfate adenylyltransferase subunit 2 (308 aa).

A disordered region spans residues 286–308 (RQGRIIDHDGSASMEKKKQEGYF).

It belongs to the PAPS reductase family. CysD subfamily. As to quaternary structure, heterodimer composed of CysD, the smaller subunit, and CysN.

The enzyme catalyses sulfate + ATP + H(+) = adenosine 5'-phosphosulfate + diphosphate. It participates in sulfur metabolism; hydrogen sulfide biosynthesis; sulfite from sulfate: step 1/3. In terms of biological role, with CysN forms the ATP sulfurylase (ATPS) that catalyzes the adenylation of sulfate producing adenosine 5'-phosphosulfate (APS) and diphosphate, the first enzymatic step in sulfur assimilation pathway. APS synthesis involves the formation of a high-energy phosphoric-sulfuric acid anhydride bond driven by GTP hydrolysis by CysN coupled to ATP hydrolysis by CysD. In Nocardia farcinica (strain IFM 10152), this protein is Sulfate adenylyltransferase subunit 2.